Reading from the N-terminus, the 250-residue chain is MPRKNYICNLKPVFNPPKNEKKRSNFIDYAMKKASEIDVARSKLNYTLLAIDPKTGNILPRFRRLNEHRACAMRAIVLAMLYYWNTNSNLVEASIEKLSDECGLSTFSNSGNKSITRASRLITDFMEPMGFIKCKRKKTQSSSNYIPKKIFLTSNFFMLFHISQSTINQYLSEQKQSIKNLKKEKKIFISFSDIRVISKLDEKAARNKILNALIKYYSASELTKIGPQGLKKKIDIEYSNLCKLYKKNNK.

This sequence belongs to the IncFII RepA family.

In terms of biological role, this protein is essential for plasmid replication; it is involved in copy control functions. In Buchnera aphidicola subsp. Schizaphis graminum (strain Sg), this protein is Probable replication-associated protein repA2 (repA2).